Reading from the N-terminus, the 30-residue chain is Cycloviolacin-O4 (30 aa).

The cyclopeptide (Gly-Asn) cross-link spans 1 to 30 (GIPCGESCVWIPCISSAIGCSCKNKVCYRN). 3 disulfide bridges follow: Cys-4–Cys-20, Cys-8–Cys-22, and Cys-13–Cys-27.

Post-translationally, this is a cyclic peptide. In terms of tissue distribution, expressed in petals, petioles, roots and runners but not in leaves (at protein level).

In terms of biological role, probably participates in a plant defense mechanism. In Viola odorata (Sweet violet), this protein is Cycloviolacin-O4.